The following is a 1026-amino-acid chain: Leucine-rich repeat and coiled-coil domain-containing protein 1 (1026 aa).

LRR repeat units follow at residues serine 39 to tryptophan 60, asparagine 61 to threonine 82, lysine 83 to valine 104, asparagine 105 to histidine 126, and lysine 131 to threonine 152. Residues asparagine 170–leucine 212 enclose the LRRCT domain. The interval aspartate 310–serine 338 is disordered. Basic and acidic residues predominate over residues valine 312–aspartate 324. Residues arginine 428–leucine 641 adopt a coiled-coil conformation.

It belongs to the LRRCC1 family.

It is found in the cytoplasm. It localises to the cytoskeleton. The protein resides in the microtubule organizing center. Its subcellular location is the centrosome. The protein localises to the centriole. In terms of biological role, required for the organization of the mitotic spindle. Maintains the structural integrity of centrosomes during mitosis. This Mus musculus (Mouse) protein is Leucine-rich repeat and coiled-coil domain-containing protein 1 (Lrrcc1).